Here is a 452-residue protein sequence, read N- to C-terminus: Bifunctional protein GlmU (452 aa).

The tract at residues M1–R218 is pyrophosphorylase. Residues L6–G9, K20, Q68, G73–T74, Y95–D97, G134, E147, N162, and N216 each bind UDP-N-acetyl-alpha-D-glucosamine. D97 is a binding site for Mg(2+). N216 serves as a coordination point for Mg(2+). A linker region spans residues I219 to S239. Residues G240–E452 are N-acetyltransferase. UDP-N-acetyl-alpha-D-glucosamine-binding residues include R321 and K339. The active-site Proton acceptor is H351. Residues Y354 and N365 each coordinate UDP-N-acetyl-alpha-D-glucosamine. Acetyl-CoA-binding positions include A368, N374 to Y375, S393, A411, and R428.

It in the N-terminal section; belongs to the N-acetylglucosamine-1-phosphate uridyltransferase family. The protein in the C-terminal section; belongs to the transferase hexapeptide repeat family. Homotrimer. The cofactor is Mg(2+).

The protein resides in the cytoplasm. It carries out the reaction alpha-D-glucosamine 1-phosphate + acetyl-CoA = N-acetyl-alpha-D-glucosamine 1-phosphate + CoA + H(+). The enzyme catalyses N-acetyl-alpha-D-glucosamine 1-phosphate + UTP + H(+) = UDP-N-acetyl-alpha-D-glucosamine + diphosphate. Its pathway is nucleotide-sugar biosynthesis; UDP-N-acetyl-alpha-D-glucosamine biosynthesis; N-acetyl-alpha-D-glucosamine 1-phosphate from alpha-D-glucosamine 6-phosphate (route II): step 2/2. It functions in the pathway nucleotide-sugar biosynthesis; UDP-N-acetyl-alpha-D-glucosamine biosynthesis; UDP-N-acetyl-alpha-D-glucosamine from N-acetyl-alpha-D-glucosamine 1-phosphate: step 1/1. It participates in bacterial outer membrane biogenesis; LPS lipid A biosynthesis. In terms of biological role, catalyzes the last two sequential reactions in the de novo biosynthetic pathway for UDP-N-acetylglucosamine (UDP-GlcNAc). The C-terminal domain catalyzes the transfer of acetyl group from acetyl coenzyme A to glucosamine-1-phosphate (GlcN-1-P) to produce N-acetylglucosamine-1-phosphate (GlcNAc-1-P), which is converted into UDP-GlcNAc by the transfer of uridine 5-monophosphate (from uridine 5-triphosphate), a reaction catalyzed by the N-terminal domain. This Fervidobacterium nodosum (strain ATCC 35602 / DSM 5306 / Rt17-B1) protein is Bifunctional protein GlmU.